We begin with the raw amino-acid sequence, 508 residues long: Photosystem II CP47 reaction center protein (508 aa).

6 helical membrane passes run 21-36 (AVHI…WAGS), 101-115 (ILFS…IWHW), 140-156 (GIHL…FGAF), 203-218 (IAAG…FHLS), 237-252 (VLSS…AFVV), and 457-472 (SFAL…HGAR).

The protein belongs to the PsbB/PsbC family. PsbB subfamily. PSII is composed of 1 copy each of membrane proteins PsbA, PsbB, PsbC, PsbD, PsbE, PsbF, PsbH, PsbI, PsbJ, PsbK, PsbL, PsbM, PsbT, PsbX, PsbY, PsbZ, Psb30/Ycf12, at least 3 peripheral proteins of the oxygen-evolving complex and a large number of cofactors. It forms dimeric complexes. Binds multiple chlorophylls. PSII binds additional chlorophylls, carotenoids and specific lipids. serves as cofactor.

The protein localises to the plastid. The protein resides in the chloroplast thylakoid membrane. One of the components of the core complex of photosystem II (PSII). It binds chlorophyll and helps catalyze the primary light-induced photochemical processes of PSII. PSII is a light-driven water:plastoquinone oxidoreductase, using light energy to abstract electrons from H(2)O, generating O(2) and a proton gradient subsequently used for ATP formation. The protein is Photosystem II CP47 reaction center protein of Oenothera biennis (German evening primrose).